We begin with the raw amino-acid sequence, 207 residues long: Ribosomal RNA small subunit methyltransferase G (207 aa).

Residues Gly-73, Leu-78, 124–125 (VE), and Arg-139 each bind S-adenosyl-L-methionine.

Belongs to the methyltransferase superfamily. RNA methyltransferase RsmG family.

The protein resides in the cytoplasm. It carries out the reaction guanosine(527) in 16S rRNA + S-adenosyl-L-methionine = N(7)-methylguanosine(527) in 16S rRNA + S-adenosyl-L-homocysteine. In terms of biological role, specifically methylates the N7 position of guanine in position 527 of 16S rRNA. The chain is Ribosomal RNA small subunit methyltransferase G from Salmonella agona (strain SL483).